The primary structure comprises 170 residues: Cyclic pyranopterin monophosphate synthase 1 (170 aa).

Residues 79 to 81 and 116 to 117 each bind substrate; these read LCH and ME. Residue Asp131 is part of the active site.

The protein belongs to the MoaC family. In terms of assembly, homohexamer; trimer of dimers.

It catalyses the reaction (8S)-3',8-cyclo-7,8-dihydroguanosine 5'-triphosphate = cyclic pyranopterin phosphate + diphosphate. The protein operates within cofactor biosynthesis; molybdopterin biosynthesis. In terms of biological role, catalyzes the conversion of (8S)-3',8-cyclo-7,8-dihydroguanosine 5'-triphosphate to cyclic pyranopterin monophosphate (cPMP). The polypeptide is Cyclic pyranopterin monophosphate synthase 1 (moaC1) (Mycobacterium bovis (strain ATCC BAA-935 / AF2122/97)).